The following is an 889-amino-acid chain: Terminal uridylyltransferase 3 (889 aa).

The C2H2-type; atypical zinc-finger motif lies at 123–151 (VRCDLCAKMIESRDEEQIQEHFQVHHAAL). Positions 125, 128, 143, and 148 each coordinate Zn(2+). UTP contacts are provided by residues S225 and 236-239 (SDAD). Mg(2+)-binding residues include D237 and D239. R286 contacts RNA. Residues 394-398 (GVRNS), K419, K423, and 437-438 (SY) each bind UTP. The PAP-associated domain occupies 505–572 (LGGLIPLFFL…LCIDDPYEDN (68 aa)). Residues 565–574 (IDDPYEDNFN) carry the Nucleotide recognition motif (NRM) motif. Disordered regions lie at residues 675–702 (NNKS…HVES) and 829–849 (RKKS…NHAG). Residues 829–846 (RKKSKGSKKRKNAVRRGN) show a composition bias toward basic residues.

This sequence belongs to the DNA polymerase type-B-like family. It depends on Mg(2+) as a cofactor. Mn(2+) serves as cofactor.

Its subcellular location is the cytoplasm. It catalyses the reaction RNA(n) + UTP = RNA(n)-3'-uridine ribonucleotide + diphosphate. Its function is as follows. Terminal uridylyltransferase which catalyzes the addition of Us to the 3'-hydroxyl group of single-stranded RNAs. Does not mediate RNA-independent UTP polymerization. The polypeptide is Terminal uridylyltransferase 3 (Trypanosoma brucei brucei).